Here is a 499-residue protein sequence, read N- to C-terminus: Gypsy retrotransposon integrase-like protein 1 (499 aa).

The Integrase catalytic domain occupies lysine 113–asparagine 270.

This is Gypsy retrotransposon integrase-like protein 1 (GIN1) from Bos taurus (Bovine).